The following is a 480-amino-acid chain: Na(+)/H(+) antiporter NhaA (480 aa).

A run of 11 helical transmembrane segments spans residues 34–54, 76–96, 113–133, 144–164, 174–194, 197–217, 223–243, 282–302, 312–332, 350–370, and 381–401; these read VGGV…NIPA, LSVA…VAGI, AVLP…VYTL, GWAV…AVIG, FLLT…AIFF, RINF…WLLL, GWYV…NSGV, GLAV…GGAL, LGVV…STWL, IFAV…IGEL, and EVKA…TVLL. Residues 454 to 480 form a disordered region; the sequence is AAEKAAAARHGGAEVPGGAGEEDGRPA.

It belongs to the NhaA Na(+)/H(+) (TC 2.A.33) antiporter family.

The protein localises to the cell membrane. The enzyme catalyses Na(+)(in) + 2 H(+)(out) = Na(+)(out) + 2 H(+)(in). In terms of biological role, na(+)/H(+) antiporter that extrudes sodium in exchange for external protons. The sequence is that of Na(+)/H(+) antiporter NhaA from Streptomyces antibioticus.